Consider the following 84-residue polypeptide: RNA-binding protein SAHV_0542 (84 aa).

The protein belongs to the eukaryotic ribosomal protein eL8 family.

The chain is RNA-binding protein SAHV_0542 from Staphylococcus aureus (strain Mu3 / ATCC 700698).